We begin with the raw amino-acid sequence, 369 residues long: Chaperone protein DnaJ (369 aa).

Positions 7–73 constitute a J domain; it reads DYYEILGVPR…QKRAMYDRFG (67 aa). The CR-type zinc-finger motif lies at 143–225; that stretch reads GAEIPVEYER…CGGSGRVLRK (83 aa). Zn(2+) contacts are provided by C156, C159, C173, C176, C199, C202, C213, and C216. CXXCXGXG motif repeat units follow at residues 156–163, 173–180, 199–206, and 213–220; these read CPRCGGTG, CPSCGGTG, CERCGGTG, and CHECGGSG.

The protein belongs to the DnaJ family. In terms of assembly, homodimer. Requires Zn(2+) as cofactor.

It is found in the cytoplasm. Participates actively in the response to hyperosmotic and heat shock by preventing the aggregation of stress-denatured proteins and by disaggregating proteins, also in an autonomous, DnaK-independent fashion. Unfolded proteins bind initially to DnaJ; upon interaction with the DnaJ-bound protein, DnaK hydrolyzes its bound ATP, resulting in the formation of a stable complex. GrpE releases ADP from DnaK; ATP binding to DnaK triggers the release of the substrate protein, thus completing the reaction cycle. Several rounds of ATP-dependent interactions between DnaJ, DnaK and GrpE are required for fully efficient folding. Also involved, together with DnaK and GrpE, in the DNA replication of plasmids through activation of initiation proteins. This Thermotoga sp. (strain RQ2) protein is Chaperone protein DnaJ.